We begin with the raw amino-acid sequence, 325 residues long: G/U mismatch-specific uracil DNA glycosylase (325 aa).

Residues 1 to 11 (MNDIETRDTGT) are compositionally biased toward basic and acidic residues. Positions 1–50 (MNDIETRDTGTKNDNSSEFNLSVKSHKRKRSFDDENLELEESREETSGGI) are disordered. Over residues 12 to 23 (KNDNSSEFNLSV) the composition is skewed to polar residues. A compositionally biased stretch (acidic residues) spans 34-43 (DENLELEESR).

This sequence belongs to the uracil-DNA glycosylase (UDG) superfamily. TDG/mug family.

The protein localises to the nucleus. The enzyme catalyses Specifically hydrolyzes mismatched double-stranded DNA and polynucleotides, releasing free uracil.. Functionally, removes uracil from G/U mispairs in ssDNA. Also corrects G/G mispairs. Does not catalyze the removal of thymine from G/T mispairs. This is G/U mismatch-specific uracil DNA glycosylase (thp1) from Schizosaccharomyces pombe (strain 972 / ATCC 24843) (Fission yeast).